An 87-amino-acid polypeptide reads, in one-letter code: Phosphocarrier protein HPr (87 aa).

One can recognise an HPr domain in the interval 1–87 (MASKDFHIVA…AETMTKEGLA (87 aa)). The active-site Pros-phosphohistidine intermediate is the histidine 15. Position 46 is a phosphoserine; by HPrK/P (serine 46).

This sequence belongs to the HPr family.

It localises to the cytoplasm. Phosphorylation on Ser-46 inhibits the phosphoryl transfer from enzyme I to HPr. General (non sugar-specific) component of the phosphoenolpyruvate-dependent sugar phosphotransferase system (sugar PTS). This major carbohydrate active-transport system catalyzes the phosphorylation of incoming sugar substrates concomitantly with their translocation across the cell membrane. The phosphoryl group from phosphoenolpyruvate (PEP) is transferred to the phosphoryl carrier protein HPr by enzyme I. Phospho-HPr then transfers it to the PTS EIIA domain. Functionally, P-Ser-HPr interacts with the catabolite control protein A (CcpA), forming a complex that binds to DNA at the catabolite response elements cre, operator sites preceding a large number of catabolite-regulated genes. Thus, P-Ser-HPr is a corepressor in carbon catabolite repression (CCR), a mechanism that allows bacteria to coordinate and optimize the utilization of available carbon sources. P-Ser-HPr also plays a role in inducer exclusion, in which it probably interacts with several non-PTS permeases and inhibits their transport activity. In Streptococcus salivarius, this protein is Phosphocarrier protein HPr (ptsH).